We begin with the raw amino-acid sequence, 442 residues long: Pyruvate dehydrogenase complex protein X component, mitochondrial (442 aa).

The N-terminal 35 residues, 1 to 35, are a transit peptide targeting the mitochondrion; that stretch reads MASLAAACRVSARLAARKLQHDAAVRGFRSSAAAL. In terms of domain architecture, Lipoyl-binding spans 37-113; that stretch reads AQNFMMPALS…QVGTRIAVVA (77 aa). Residue Lys78 is modified to N6-lipoyllysine. Positions 119–169 are disordered; sequence ITKLEIPPDEGPQQLKAAAPAPAPTPAPAPASPQPQFAAPTPSPPKASTKV. Residues 139 to 151 are compositionally biased toward pro residues; that stretch reads APAPTPAPAPASP. Residues 152–169 are compositionally biased toward low complexity; sequence QPQFAAPTPSPPKASTKV. Positions 175–215 constitute a Peripheral subunit-binding (PSBD) domain; sequence PLLPSVHQLIKENGLDESAVSNITPTGPGGRILKGDVLAYL. Residues 244 to 269 are disordered; it reads AKPVEPEKPQEEKASAPAPAPRAPEP. The segment covering 245-257 has biased composition (basic and acidic residues); it reads KPVEPEKPQEEKA. The interaction to the E2 core stretch occupies residues 317-336; the sequence is PLPTNYQPTADELFDQVLGL.

It belongs to the 2-oxoacid dehydrogenase family. In terms of assembly, eukaryotic pyruvate dehydrogenase (PDH) complexes are organized as a core consisting of the oligomeric dihydrolipoamide acetyl-transferase (E2), around which are arranged multiple copies of pyruvate dehydrogenase (E1), dihydrolipoamide dehydrogenase (E3) and protein X (E3BP) bound by non-covalent bonds. The Chaetomium thermophilum PDH complex contains 60 E2 units, 12 E3BP units, about 20 E1 units, and 12 or more E3 units. The units are organized in 1 E2 60-mer, 4 E3BP trimers, about 20 E1 tetramers, and a maximum of 12 E3 dimers. The E3BP trimers are bound inside the icosahedral core with tetrahedral symmetry.

The protein resides in the mitochondrion. Functionally, the 10-megadalton pyruvate dehydrogenase complex contains multiple copies of three enzymatic components: pyruvate dehydrogenase (E1), dihydrolipoamide acetyltransferase (E2) and lipoamide dehydrogenase (E3) and catalyzes the overall oxidative decarboxylation of pyruvate to form acetyl-CoA and CO(2). E3BP is responsible for tethering E3 in proximity to the core, forming the entire metabolon, and the number of E3s is limited by the number of E3BPs. Within the complex, pyruvate and thiamine pyrophosphate (TPP or vitamin B1) are bound by pyruvate dehydrogenase E1 subunits alpha and beta and pyruvate is decarboxylated leading to the 2-carbon hydrohyethyl bound to TPP. The E2 component contains covalently-bound lipoyl cofactors and transfers the hydroxyethyl group from TPP to an oxidized form of covalently bound lipoamide, and the resulting acetyl group is then transferred to free coenzyme A to form acetyl-CoA and reduced dihydrolipoamide-E2. Finally, the flavoprotein dihydrolipoamide dehydrogenase (E3) re-oxidizes the lipoyl group of dihydrolipoamide-E2 to form lipoamide-E2 and NADH. A fourth subunit, E3BP, is responsible for tethering E3 in proximity to the core, forming the entire metabolon. The chain is Pyruvate dehydrogenase complex protein X component, mitochondrial from Chaetomium thermophilum (strain DSM 1495 / CBS 144.50 / IMI 039719) (Thermochaetoides thermophila).